The sequence spans 326 residues: DNA-directed RNA polymerase subunit alpha (326 aa).

Residues 1–231 (MQTALLKPKI…DQLSVFAALE (231 aa)) form an alpha N-terminal domain (alpha-NTD) region. The interval 247-326 (IDPILLRPVD…ENWPPAGLDK (80 aa)) is alpha C-terminal domain (alpha-CTD).

The protein belongs to the RNA polymerase alpha chain family. Homodimer. The RNAP catalytic core consists of 2 alpha, 1 beta, 1 beta' and 1 omega subunit. When a sigma factor is associated with the core the holoenzyme is formed, which can initiate transcription.

It catalyses the reaction RNA(n) + a ribonucleoside 5'-triphosphate = RNA(n+1) + diphosphate. In terms of biological role, DNA-dependent RNA polymerase catalyzes the transcription of DNA into RNA using the four ribonucleoside triphosphates as substrates. The sequence is that of DNA-directed RNA polymerase subunit alpha from Cupriavidus pinatubonensis (strain JMP 134 / LMG 1197) (Cupriavidus necator (strain JMP 134)).